A 158-amino-acid polypeptide reads, in one-letter code: SsrA-binding protein (158 aa).

The disordered stretch occupies residues 131–158 (KQLHDKRQTEKERDWNKQKQRILQTNQR). Basic and acidic residues predominate over residues 132–147 (QLHDKRQTEKERDWNK).

Belongs to the SmpB family.

It is found in the cytoplasm. Required for rescue of stalled ribosomes mediated by trans-translation. Binds to transfer-messenger RNA (tmRNA), required for stable association of tmRNA with ribosomes. tmRNA and SmpB together mimic tRNA shape, replacing the anticodon stem-loop with SmpB. tmRNA is encoded by the ssrA gene; the 2 termini fold to resemble tRNA(Ala) and it encodes a 'tag peptide', a short internal open reading frame. During trans-translation Ala-aminoacylated tmRNA acts like a tRNA, entering the A-site of stalled ribosomes, displacing the stalled mRNA. The ribosome then switches to translate the ORF on the tmRNA; the nascent peptide is terminated with the 'tag peptide' encoded by the tmRNA and targeted for degradation. The ribosome is freed to recommence translation, which seems to be the essential function of trans-translation. This chain is SsrA-binding protein, found in Teredinibacter turnerae (strain ATCC 39867 / T7901).